Consider the following 153-residue polypeptide: Superoxide dismutase [Cu-Zn] (153 aa).

Cu cation is bound by residues H45, H47, and H62. Residues C56 and C145 are joined by a disulfide bond. Zn(2+) is bound by residues H62, H70, H79, and D82. H119 is a Cu cation binding site.

It belongs to the Cu-Zn superoxide dismutase family. As to quaternary structure, homodimer. Cu cation serves as cofactor. It depends on Zn(2+) as a cofactor.

It localises to the cytoplasm. It catalyses the reaction 2 superoxide + 2 H(+) = H2O2 + O2. In terms of biological role, destroys radicals which are normally produced within the cells and which are toxic to biological systems. This chain is Superoxide dismutase [Cu-Zn], found in Drosophila erecta (Fruit fly).